The primary structure comprises 99 residues: uncharacterized protein (99 aa).

The stretch at 3–68 forms a coiled coil; sequence ERLKAITNLL…EKFDSNRKFY (66 aa).

This is an uncharacterized protein from Aquifex aeolicus (strain VF5).